We begin with the raw amino-acid sequence, 639 residues long: Mediator of RNA polymerase II transcription subunit 17 (639 aa).

Residues 160-187 (RLQSFNAAADKLLKSASRLENEVASETR) are a coiled coil.

The protein belongs to the Mediator complex subunit 17 family. As to quaternary structure, component of the Mediator complex.

It is found in the nucleus. Its function is as follows. Component of the Mediator complex, a coactivator involved in the regulated transcription of nearly all RNA polymerase II-dependent genes. Mediator functions as a bridge to convey information from gene-specific regulatory proteins to the basal RNA polymerase II transcription machinery. Mediator is recruited to promoters by direct interactions with regulatory proteins and serves as a scaffold for the assembly of a functional preinitiation complex with RNA polymerase II and the general transcription factors. This chain is Mediator of RNA polymerase II transcription subunit 17 (srb4), found in Aspergillus fumigatus (strain ATCC MYA-4609 / CBS 101355 / FGSC A1100 / Af293) (Neosartorya fumigata).